We begin with the raw amino-acid sequence, 330 residues long: Phosphate acyltransferase (330 aa).

It belongs to the PlsX family. In terms of assembly, homodimer. Probably interacts with PlsY.

It is found in the cytoplasm. The enzyme catalyses a fatty acyl-[ACP] + phosphate = an acyl phosphate + holo-[ACP]. Its pathway is lipid metabolism; phospholipid metabolism. Its function is as follows. Catalyzes the reversible formation of acyl-phosphate (acyl-PO(4)) from acyl-[acyl-carrier-protein] (acyl-ACP). This enzyme utilizes acyl-ACP as fatty acyl donor, but not acyl-CoA. This chain is Phosphate acyltransferase, found in Bacillus cereus (strain G9842).